The sequence spans 449 residues: tRNA (guanine(37)-N(1))-methyltransferase (449 aa).

S-adenosyl-L-methionine contacts are provided by residues His216, 254–255, 282–283, and Asn345; these read DL and DG.

Belongs to the class I-like SAM-binding methyltransferase superfamily. TRM5/TYW2 family. Monomer.

It localises to the mitochondrion matrix. The protein localises to the nucleus. It is found in the cytoplasm. It carries out the reaction guanosine(37) in tRNA + S-adenosyl-L-methionine = N(1)-methylguanosine(37) in tRNA + S-adenosyl-L-homocysteine + H(+). Its function is as follows. Specifically methylates the N1 position of guanosine-37 in various cytoplasmic and mitochondrial tRNAs. Methylation is not dependent on the nature of the nucleoside 5' of the target nucleoside. This is the first step in the biosynthesis of wybutosine (yW), a modified base adjacent to the anticodon of tRNAs and required for accurate decoding. The sequence is that of tRNA (guanine(37)-N(1))-methyltransferase from Candida albicans (strain WO-1) (Yeast).